Reading from the N-terminus, the 183-residue chain is (2E)-enoyl-[ACP] glycyltransferase (183 aa).

It belongs to the FcoT family.

It catalyses the reaction a (3R)-3-[(carboxymethyl)amino]fatty acid + holo-[ACP] + H(+) = a (2E)-enoyl-[ACP] + glycine + H2O. The catalysed reaction is (3R)-3-[(carboxylmethyl)amino]decanoate + holo-[ACP] + H(+) = (2E)-decenoyl-[ACP] + glycine + H2O. It carries out the reaction a fatty acyl-CoA + H2O = a fatty acid + CoA + H(+). Functionally, involved in the biosynthesis of a unique class of isonitrile lipopeptides (INLPs) that seem to play a role in metal acquisition. Catalyzes a Michael addition of glycine to the beta-position of an alpha,beta-unsaturated fatty acyl-[ACP], producing a (3R)-3-[(carboxymethyl)amino]fatty acid. Acts on the (2E)-decenoyl moiety loaded on the acyl-carrier protein (ACP) BQ2027_MB0103, forming the product (3R)-3-[(carboxymethyl)amino]decanoate released from the ACP. Displays thioesterase activity with a preference for long chain fatty acyl groups. This is (2E)-enoyl-[ACP] glycyltransferase from Mycobacterium bovis (strain ATCC BAA-935 / AF2122/97).